The primary structure comprises 319 residues: Inositol-tetrakisphosphate 1-kinase 1 (319 aa).

Ser-2 carries the post-translational modification N-acetylserine. Residues Lys-18 and Lys-60 each coordinate 1D-myo-inositol 1,3,4-trisphosphate. ATP contacts are provided by Arg-95 and Lys-145. Positions 99-318 (LEVITQLRFP…FWDMVTKKNH (220 aa)) constitute an ATP-grasp domain. The 1D-myo-inositol 1,3,4-trisphosphate site is built by His-156 and Lys-188. Residues 177–188 (QEFVNHGGVIFK) and Ser-203 contribute to the ATP site. The Mg(2+) site is built by Asp-273, Asp-288, and Asn-290. Residue Asn-290 participates in 1D-myo-inositol 1,3,4-trisphosphate binding.

This sequence belongs to the ITPK1 family. Monomer. Mg(2+) is required as a cofactor. Expressed in siliques.

It catalyses the reaction 1D-myo-inositol 3,4,5,6-tetrakisphosphate + ATP = 1D-myo-inositol 1,3,4,5,6-pentakisphosphate + ADP + H(+). It carries out the reaction 1D-myo-inositol 1,3,4-trisphosphate + ATP = 1D-myo-inositol 1,3,4,5-tetrakisphosphate + ADP + H(+). The enzyme catalyses 1D-myo-inositol 1,3,4-trisphosphate + ATP = 1D-myo-inositol 1,3,4,6-tetrakisphosphate + ADP + H(+). Its function is as follows. Kinase that can phosphorylate various inositol polyphosphate such as Ins(3,4,5,6)P4 or Ins(1,3,4)P3. Phosphorylates Ins(3,4,5,6)P4 at position 1 to form Ins(1,3,4,5,6)P5. This reaction is thought to have regulatory importance, since Ins(3,4,5,6)P4 is an inhibitor of plasma membrane Ca(2+)-activated Cl(-) channels, while Ins(1,3,4,5,6)P5 is not. Also phosphorylates Ins(1,3,4)P3 on O-5 and O-6 to form Ins(1,3,4,6)P4, an essential molecule in the hexakisphosphate (InsP6) pathway. The sequence is that of Inositol-tetrakisphosphate 1-kinase 1 (ITPK1) from Arabidopsis thaliana (Mouse-ear cress).